Consider the following 248-residue polypeptide: Probable transcriptional regulatory protein OCAR_7305/OCA5_c08120 (248 aa).

The protein belongs to the TACO1 family.

It localises to the cytoplasm. The polypeptide is Probable transcriptional regulatory protein OCAR_7305/OCA5_c08120 (Afipia carboxidovorans (strain ATCC 49405 / DSM 1227 / KCTC 32145 / OM5) (Oligotropha carboxidovorans)).